A 457-amino-acid polypeptide reads, in one-letter code: Siroheme synthase (457 aa).

The tract at residues 1–204 is precorrin-2 dehydrogenase /sirohydrochlorin ferrochelatase; that stretch reads MDHLPIFCQL…ADEKAVNATT (204 aa). NAD(+)-binding positions include 22 to 23 and 43 to 44; these read DV and LT. Ser-128 is modified (phosphoserine). The interval 216–457 is uroporphyrinogen-III C-methyltransferase; the sequence is GEVVLVGAGP…RDKLNWFSNH (242 aa). Residue Pro-225 participates in S-adenosyl-L-methionine binding. Asp-248 serves as the catalytic Proton acceptor. Catalysis depends on Lys-270, which acts as the Proton donor. S-adenosyl-L-methionine-binding positions include 301-303, Ile-306, 331-332, Met-382, and Gly-411; these read GGD and TA.

This sequence in the N-terminal section; belongs to the precorrin-2 dehydrogenase / sirohydrochlorin ferrochelatase family. In the C-terminal section; belongs to the precorrin methyltransferase family.

It carries out the reaction uroporphyrinogen III + 2 S-adenosyl-L-methionine = precorrin-2 + 2 S-adenosyl-L-homocysteine + H(+). The catalysed reaction is precorrin-2 + NAD(+) = sirohydrochlorin + NADH + 2 H(+). It catalyses the reaction siroheme + 2 H(+) = sirohydrochlorin + Fe(2+). It participates in cofactor biosynthesis; adenosylcobalamin biosynthesis; precorrin-2 from uroporphyrinogen III: step 1/1. It functions in the pathway cofactor biosynthesis; adenosylcobalamin biosynthesis; sirohydrochlorin from precorrin-2: step 1/1. The protein operates within porphyrin-containing compound metabolism; siroheme biosynthesis; precorrin-2 from uroporphyrinogen III: step 1/1. Its pathway is porphyrin-containing compound metabolism; siroheme biosynthesis; siroheme from sirohydrochlorin: step 1/1. It participates in porphyrin-containing compound metabolism; siroheme biosynthesis; sirohydrochlorin from precorrin-2: step 1/1. In terms of biological role, multifunctional enzyme that catalyzes the SAM-dependent methylations of uroporphyrinogen III at position C-2 and C-7 to form precorrin-2 via precorrin-1. Then it catalyzes the NAD-dependent ring dehydrogenation of precorrin-2 to yield sirohydrochlorin. Finally, it catalyzes the ferrochelation of sirohydrochlorin to yield siroheme. The chain is Siroheme synthase from Salmonella schwarzengrund (strain CVM19633).